The chain runs to 161 residues: Ureidoglycolate lyase (161 aa).

This sequence belongs to the ureidoglycolate lyase family. Homodimer. Ni(2+) serves as cofactor.

It carries out the reaction (S)-ureidoglycolate = urea + glyoxylate. It functions in the pathway nitrogen metabolism; (S)-allantoin degradation. Functionally, catalyzes the catabolism of the allantoin degradation intermediate (S)-ureidoglycolate, generating urea and glyoxylate. Involved in the utilization of allantoin as nitrogen source. The chain is Ureidoglycolate lyase from Rhodobacter capsulatus (strain ATCC BAA-309 / NBRC 16581 / SB1003).